The primary structure comprises 147 residues: D-aminoacyl-tRNA deacylase (147 aa).

The Gly-cisPro motif, important for rejection of L-amino acids motif lies at 139–140 (GP).

Belongs to the DTD family. In terms of assembly, homodimer.

It is found in the cytoplasm. It carries out the reaction glycyl-tRNA(Ala) + H2O = tRNA(Ala) + glycine + H(+). The enzyme catalyses a D-aminoacyl-tRNA + H2O = a tRNA + a D-alpha-amino acid + H(+). Functionally, an aminoacyl-tRNA editing enzyme that deacylates mischarged D-aminoacyl-tRNAs. Also deacylates mischarged glycyl-tRNA(Ala), protecting cells against glycine mischarging by AlaRS. Acts via tRNA-based rather than protein-based catalysis; rejects L-amino acids rather than detecting D-amino acids in the active site. By recycling D-aminoacyl-tRNA to D-amino acids and free tRNA molecules, this enzyme counteracts the toxicity associated with the formation of D-aminoacyl-tRNA entities in vivo and helps enforce protein L-homochirality. This is D-aminoacyl-tRNA deacylase from Rippkaea orientalis (strain PCC 8801 / RF-1) (Cyanothece sp. (strain PCC 8801)).